The chain runs to 156 residues: Ribosomal RNA large subunit methyltransferase H (156 aa).

S-adenosyl-L-methionine contacts are provided by residues Leu73, Gly104, and 123-128 (LSALTL).

This sequence belongs to the RNA methyltransferase RlmH family. As to quaternary structure, homodimer.

It localises to the cytoplasm. The enzyme catalyses pseudouridine(1915) in 23S rRNA + S-adenosyl-L-methionine = N(3)-methylpseudouridine(1915) in 23S rRNA + S-adenosyl-L-homocysteine + H(+). In terms of biological role, specifically methylates the pseudouridine at position 1915 (m3Psi1915) in 23S rRNA. This chain is Ribosomal RNA large subunit methyltransferase H, found in Shewanella piezotolerans (strain WP3 / JCM 13877).